Reading from the N-terminus, the 250-residue chain is Probable transcriptional regulatory protein Ppha_0657 (250 aa).

Belongs to the TACO1 family.

It localises to the cytoplasm. The chain is Probable transcriptional regulatory protein Ppha_0657 from Pelodictyon phaeoclathratiforme (strain DSM 5477 / BU-1).